A 252-amino-acid polypeptide reads, in one-letter code: Imidazole glycerol phosphate synthase subunit HisF (252 aa).

Residues D11 and D130 contribute to the active site.

The protein belongs to the HisA/HisF family. Heterodimer of HisH and HisF.

The protein localises to the cytoplasm. It catalyses the reaction 5-[(5-phospho-1-deoxy-D-ribulos-1-ylimino)methylamino]-1-(5-phospho-beta-D-ribosyl)imidazole-4-carboxamide + L-glutamine = D-erythro-1-(imidazol-4-yl)glycerol 3-phosphate + 5-amino-1-(5-phospho-beta-D-ribosyl)imidazole-4-carboxamide + L-glutamate + H(+). The protein operates within amino-acid biosynthesis; L-histidine biosynthesis; L-histidine from 5-phospho-alpha-D-ribose 1-diphosphate: step 5/9. In terms of biological role, IGPS catalyzes the conversion of PRFAR and glutamine to IGP, AICAR and glutamate. The HisF subunit catalyzes the cyclization activity that produces IGP and AICAR from PRFAR using the ammonia provided by the HisH subunit. The chain is Imidazole glycerol phosphate synthase subunit HisF from Bacillus cereus (strain ATCC 10987 / NRS 248).